Here is a 310-residue protein sequence, read N- to C-terminus: tRNA-cytidine(32) 2-sulfurtransferase (310 aa).

A PP-loop motif motif is present at residues 48 to 53 (SGGKDS). Positions 123, 126, and 214 each coordinate [4Fe-4S] cluster.

This sequence belongs to the TtcA family. In terms of assembly, homodimer. It depends on Mg(2+) as a cofactor. Requires [4Fe-4S] cluster as cofactor.

The protein resides in the cytoplasm. It catalyses the reaction cytidine(32) in tRNA + S-sulfanyl-L-cysteinyl-[cysteine desulfurase] + AH2 + ATP = 2-thiocytidine(32) in tRNA + L-cysteinyl-[cysteine desulfurase] + A + AMP + diphosphate + H(+). It participates in tRNA modification. Functionally, catalyzes the ATP-dependent 2-thiolation of cytidine in position 32 of tRNA, to form 2-thiocytidine (s(2)C32). The sulfur atoms are provided by the cysteine/cysteine desulfurase (IscS) system. The chain is tRNA-cytidine(32) 2-sulfurtransferase from Vibrio vulnificus (strain CMCP6).